An 827-amino-acid chain; its full sequence is Carnosine synthase 1 (827 aa).

Residues 516–720 enclose the ATP-grasp domain; it reads GPPWPSTSLH…LLLASTMVAC (205 aa). Position 542-611 (542-611) interacts with ATP; it reads IYQVPLPGVM…MEFVEGTEHD (70 aa). 3 residues coordinate Mg(2+): E677, E689, and N691. Mn(2+)-binding residues include E677, E689, and N691.

In terms of assembly, homotetramer. It depends on Mg(2+) as a cofactor. Mn(2+) serves as cofactor.

The catalysed reaction is beta-alanine + L-histidine + ATP = carnosine + ADP + phosphate + H(+). The enzyme catalyses 4-aminobutanoate + L-histidine + ATP = L-homocarnosine + ADP + phosphate + H(+). In terms of biological role, catalyzes the synthesis of carnosine and homocarnosine. Carnosine is synthesized more efficiently than homocarnosine. The protein is Carnosine synthase 1 of Mus musculus (Mouse).